Reading from the N-terminus, the 347-residue chain is Aspartate carbamoyltransferase catalytic subunit (347 aa).

Positions 75 and 76 each coordinate carbamoyl phosphate. Position 103 (lysine 103) interacts with L-aspartate. Carbamoyl phosphate contacts are provided by arginine 125, histidine 153, and glutamine 156. 2 residues coordinate L-aspartate: arginine 193 and arginine 247. Residues glycine 288 and proline 289 each coordinate carbamoyl phosphate.

This sequence belongs to the aspartate/ornithine carbamoyltransferase superfamily. ATCase family. Heterododecamer (2C3:3R2) of six catalytic PyrB chains organized as two trimers (C3), and six regulatory PyrI chains organized as three dimers (R2).

The enzyme catalyses carbamoyl phosphate + L-aspartate = N-carbamoyl-L-aspartate + phosphate + H(+). The protein operates within pyrimidine metabolism; UMP biosynthesis via de novo pathway; (S)-dihydroorotate from bicarbonate: step 2/3. Its function is as follows. Catalyzes the condensation of carbamoyl phosphate and aspartate to form carbamoyl aspartate and inorganic phosphate, the committed step in the de novo pyrimidine nucleotide biosynthesis pathway. This Erythrobacter litoralis (strain HTCC2594) protein is Aspartate carbamoyltransferase catalytic subunit.